The following is a 239-amino-acid chain: U2 small nuclear ribonucleoprotein A' (239 aa).

4 LRR repeats span residues 19-40 (KETELDLRWYQIPIIENLGVLR), 42-63 (VHDAIDFTDNDIRYLGNFPRMK), 64-85 (RLQTLLCGNNRITAIAPDIGKV), and 88-109 (NLKTLSLAQNHLQEIADLDPLA). Residues 122–160 (NPVAQKQYYRLYLIWRIPSLHILDFERVRRNERLRAEEV) form the LRRCT domain.

It belongs to the U2 small nuclear ribonucleoprotein A family. Belongs to the 40S cdc5-associated complex (or cwf complex), a spliceosome sub-complex reminiscent of a late-stage spliceosome composed of the U2, U5 and U6 snRNAs and at least brr2, cdc5, cwf2/prp3, cwf3/syf1, cwf4/syf3, cwf5/ecm2, spp42/cwf6, cwf7/spf27, cwf8, cwf9, cwf10, cwf11, cwf12, prp45/cwf13, cwf14, cwf15, cwf16, cwf17, cwf18, cwf19, cwf20, cwf21, cwf22, cwf23, cwf24, cwf25, cwf26, cyp7/cwf27, cwf28, cwf29/ist3, lea1, msl1, prp5/cwf1, prp10, prp12/sap130, prp17, prp22, sap61, sap62, sap114, sap145, slu7, smb1, smd1, smd3, smf1, smg1 and syf2.

Its subcellular location is the nucleus. Functionally, involved in pre-mRNA splicing. This protein is associated with sn-RNP U2. It helps the A' protein to bind stem loop IV of U2 snRNA. This chain is U2 small nuclear ribonucleoprotein A' (lea1), found in Schizosaccharomyces pombe (strain 972 / ATCC 24843) (Fission yeast).